Here is a 344-residue protein sequence, read N- to C-terminus: MTDASFAPSASAEFVRGLPKAELHMHIEGSLEPELMFELAQRNGITLPFASVEEIRAAYDFSNLQDFLDIYYQGAGVLITEADFKDLALAYFQRLAADGGAHAEIFFDPQTHTDRGIAFDTVMNGLLAGMDEAEKTLGVTSKLILCFLRHLSEEAAFETLEQAKPWLAKLAGVGLDSSEVGHPPAKFARVLQASRDLGLKVVAHAGEEGPPAYVWEAIDLVKVDRIDHGNRALEDEALTARLVKDGITLTVCPLSNLKLCGVPSLDVHPLKRMLDLGLKATVNSDDPAYFGGYLLENYLATADAVGLTRDDIVTLAKNSFAGSFLTDAEKAQRIAAVEAYAAAH.

Zn(2+) contacts are provided by His24, His26, and His204. Glu207 (proton donor) is an active-site residue. Residue Asp285 coordinates Zn(2+). A substrate-binding site is contributed by Asp286.

Belongs to the metallo-dependent hydrolases superfamily. Adenosine and AMP deaminases family. Adenine deaminase type 2 subfamily. It depends on Zn(2+) as a cofactor.

It carries out the reaction adenine + H2O + H(+) = hypoxanthine + NH4(+). Functionally, catalyzes the hydrolytic deamination of adenine to hypoxanthine. Plays an important role in the purine salvage pathway and in nitrogen catabolism. In Caulobacter vibrioides (strain ATCC 19089 / CIP 103742 / CB 15) (Caulobacter crescentus), this protein is Adenine deaminase.